A 116-amino-acid polypeptide reads, in one-letter code: Protein Wnt-5(I) (116 aa).

Ser-1 is lipidated: O-palmitoleoyl serine; by PORCN. Asn-69 is a glycosylation site (N-linked (GlcNAc...) asparagine). A disulfide bridge connects residues Cys-82 and Cys-97.

The protein belongs to the Wnt family. Palmitoleoylation is required for efficient binding to frizzled receptors. Depalmitoleoylation leads to Wnt signaling pathway inhibition.

It localises to the secreted. It is found in the extracellular space. Its subcellular location is the extracellular matrix. Its function is as follows. Ligand for members of the frizzled family of seven transmembrane receptors. Probable developmental protein. May be a signaling molecule which affects the development of discrete regions of tissues. Is likely to signal over only few cell diameters. The protein is Protein Wnt-5(I) (WNT-5(I)) of Eptatretus stoutii (Pacific hagfish).